The chain runs to 728 residues: Catalase-peroxidase 1 (728 aa).

Positions 91-218 (WHSAGTYRTA…LAAVQMGLIY (128 aa)) form a cross-link, tryptophyl-tyrosyl-methioninium (Trp-Tyr) (with M-244). Histidine 92 serves as the catalytic Proton acceptor. The tryptophyl-tyrosyl-methioninium (Tyr-Met) (with W-91) cross-link spans 218-244 (YVNPEGPDGNPDPVAAAHDIRETFARM). Histidine 259 provides a ligand contact to heme b.

It belongs to the peroxidase family. Peroxidase/catalase subfamily. As to quaternary structure, homodimer or homotetramer. Requires heme b as cofactor. Formation of the three residue Trp-Tyr-Met cross-link is important for the catalase, but not the peroxidase activity of the enzyme.

It carries out the reaction H2O2 + AH2 = A + 2 H2O. It catalyses the reaction 2 H2O2 = O2 + 2 H2O. Its function is as follows. Bifunctional enzyme with both catalase and broad-spectrum peroxidase activity. The protein is Catalase-peroxidase 1 of Burkholderia cenocepacia (strain ATCC BAA-245 / DSM 16553 / LMG 16656 / NCTC 13227 / J2315 / CF5610) (Burkholderia cepacia (strain J2315)).